The sequence spans 502 residues: Probable malate:quinone oxidoreductase 1 (502 aa).

Belongs to the MQO family. The cofactor is FAD.

It carries out the reaction (S)-malate + a quinone = a quinol + oxaloacetate. The protein operates within carbohydrate metabolism; tricarboxylic acid cycle; oxaloacetate from (S)-malate (quinone route): step 1/1. This is Probable malate:quinone oxidoreductase 1 from Pseudomonas putida (strain ATCC 47054 / DSM 6125 / CFBP 8728 / NCIMB 11950 / KT2440).